Consider the following 202-residue polypeptide: 3-isopropylmalate dehydratase small subunit (202 aa).

The protein belongs to the LeuD family. LeuD type 1 subfamily. In terms of assembly, heterodimer of LeuC and LeuD.

The catalysed reaction is (2R,3S)-3-isopropylmalate = (2S)-2-isopropylmalate. It functions in the pathway amino-acid biosynthesis; L-leucine biosynthesis; L-leucine from 3-methyl-2-oxobutanoate: step 2/4. Functionally, catalyzes the isomerization between 2-isopropylmalate and 3-isopropylmalate, via the formation of 2-isopropylmaleate. The chain is 3-isopropylmalate dehydratase small subunit from Buchnera aphidicola subsp. Pemphigus spyrothecae.